Consider the following 43-residue polypeptide: Protein PsbN (43 aa).

The helical transmembrane segment at 7–27 threads the bilayer; it reads VAIFISCLLVSFTGYALYTAF.

This sequence belongs to the PsbN family.

Its subcellular location is the plastid. The protein resides in the chloroplast thylakoid membrane. Functionally, may play a role in photosystem I and II biogenesis. The polypeptide is Protein PsbN (Zygnema circumcarinatum (Green alga)).